We begin with the raw amino-acid sequence, 404 residues long: Propionate kinase (404 aa).

It belongs to the acetokinase family. PduW subfamily.

The protein resides in the cytoplasm. It catalyses the reaction propanoate + ATP = propanoyl phosphate + ADP. It participates in polyol metabolism; 1,2-propanediol degradation. In terms of biological role, works with phosphate acetyltransferase (pta) to capture exogenous propionate and regenerate propionyl-CoA during degradation of 1,2-propanediol (1,2-PD). The protein is Propionate kinase of Citrobacter koseri (strain ATCC BAA-895 / CDC 4225-83 / SGSC4696).